Consider the following 252-residue polypeptide: Osmotin-like protein (252 aa).

The first 24 residues, 1–24, serve as a signal peptide directing secretion; the sequence is MASSSAKILLPLSLLFTLLSLSQS.

Its subcellular location is the secreted. It localises to the cell wall. The polypeptide is Osmotin-like protein (Solanum lycopersicum (Tomato)).